A 657-amino-acid polypeptide reads, in one-letter code: LIM and SH3 domain protein Lasp (657 aa).

The LIM zinc-binding domain occupies 3 to 63; that stretch reads KTCARCQKVV…EAHIPKAKAT (61 aa). Nebulin repeat units lie at residues 64–95 and 96–130; these read AIAD…KAKG and KFTQ…KKAA. 6 disordered regions span residues 130–151, 164–223, 235–257, 294–318, 332–415, and 460–528; these read AMEK…EYFS, PTAS…PIQH, YQQL…QLHD, LYPT…QQQA, NSHH…SAAS, and KQHA…PKRI. Residues 140 to 150 show a composition bias toward polar residues; it reads VSDSSNESEYF. Low complexity-rich tracts occupy residues 172-215 and 236-254; these read AATT…QQQT and QQLQ…QQQQ. The segment covering 332–341 has biased composition (polar residues); the sequence is NSHHPSGNSV. Residues 342–357 show a composition bias toward low complexity; it reads DQYDQPQQQQHQPQQQ. Residues 358–370 are compositionally biased toward polar residues; that stretch reads STNPTLVAAQQQQ. Residues 371-403 show a composition bias toward low complexity; that stretch reads SHHSLLNNNASNGGISHSHHSNINNNGHGSQNQ. The span at 460–475 shows a compositional bias: polar residues; it reads KQHASNGHMPNQQQQH. Phosphoserine is present on residues serine 505 and serine 530. The disordered stretch occupies residues 548-592; sequence EQAHQQQKHQQYYQQVQMMQQQEHPPQQQQMRQQPSYSSLQEKQS. A compositionally biased stretch (low complexity) spans 549–586; that stretch reads QAHQQQKHQQYYQQVQMMQQQEHPPQQQQMRQQPSYSS. Residues 596–657 form the SH3 domain; the sequence is TAMRVYRAIY…PANYVEQAVI (62 aa).

As to quaternary structure, interacts with osk.

The sequence is that of LIM and SH3 domain protein Lasp from Drosophila melanogaster (Fruit fly).